The sequence spans 160 residues: Cytochrome b6-f complex subunit 4 (160 aa).

A run of 3 helical transmembrane segments spans residues Leu36–Val56, Leu95–Glu115, and Thr131–Ile151.

This sequence belongs to the cytochrome b family. PetD subfamily. As to quaternary structure, the 4 large subunits of the cytochrome b6-f complex are cytochrome b6, subunit IV (17 kDa polypeptide, PetD), cytochrome f and the Rieske protein, while the 4 small subunits are PetG, PetL, PetM and PetN. The complex functions as a dimer.

It is found in the cellular thylakoid membrane. Functionally, component of the cytochrome b6-f complex, which mediates electron transfer between photosystem II (PSII) and photosystem I (PSI), cyclic electron flow around PSI, and state transitions. The polypeptide is Cytochrome b6-f complex subunit 4 (Parasynechococcus marenigrum (strain WH8102)).